A 1155-amino-acid polypeptide reads, in one-letter code: ATP-dependent helicase/deoxyribonuclease subunit B (1155 aa).

Residues 1 to 278 form the UvrD-like helicase ATP-binding domain; it reads MSQLNAYIGR…FTKQERFENR (278 aa). 9–16 contacts ATP; sequence GRAGTGKS. In terms of domain architecture, UvrD-like helicase C-terminal spans 270–584; the sequence is TKQERFENRD…SIGSMDLAKV (315 aa). C785, C1112, C1115, and C1121 together coordinate [4Fe-4S] cluster.

The protein belongs to the helicase family. AddB/RexB type 1 subfamily. Heterodimer of AddA and AddB. Requires Mg(2+) as cofactor. [4Fe-4S] cluster serves as cofactor.

In terms of biological role, the heterodimer acts as both an ATP-dependent DNA helicase and an ATP-dependent, dual-direction single-stranded exonuclease. Recognizes the chi site generating a DNA molecule suitable for the initiation of homologous recombination. The AddB subunit has 5' -&gt; 3' nuclease activity but not helicase activity. This is ATP-dependent helicase/deoxyribonuclease subunit B from Staphylococcus carnosus (strain TM300).